Consider the following 55-residue polypeptide: Large ribosomal subunit protein bL33 (55 aa).

Residues 1–11 (MAKSGRDKIKL) show a composition bias toward basic and acidic residues. Positions 1–27 (MAKSGRDKIKLESTAGTGHFYTTTKNK) are disordered. Polar residues predominate over residues 14–24 (TAGTGHFYTTT).

The protein belongs to the bacterial ribosomal protein bL33 family.

This Herminiimonas arsenicoxydans protein is Large ribosomal subunit protein bL33.